Reading from the N-terminus, the 246-residue chain is 3-deoxy-manno-octulosonate cytidylyltransferase (246 aa).

It belongs to the KdsB family.

The protein localises to the cytoplasm. It carries out the reaction 3-deoxy-alpha-D-manno-oct-2-ulosonate + CTP = CMP-3-deoxy-beta-D-manno-octulosonate + diphosphate. It functions in the pathway nucleotide-sugar biosynthesis; CMP-3-deoxy-D-manno-octulosonate biosynthesis; CMP-3-deoxy-D-manno-octulosonate from 3-deoxy-D-manno-octulosonate and CTP: step 1/1. The protein operates within bacterial outer membrane biogenesis; lipopolysaccharide biosynthesis. In terms of biological role, activates KDO (a required 8-carbon sugar) for incorporation into bacterial lipopolysaccharide in Gram-negative bacteria. The sequence is that of 3-deoxy-manno-octulosonate cytidylyltransferase from Paramagnetospirillum magneticum (strain ATCC 700264 / AMB-1) (Magnetospirillum magneticum).